Reading from the N-terminus, the 78-residue chain is Defensin-like protein 201 (78 aa).

The first 22 residues, 1–22, serve as a signal peptide directing secretion; that stretch reads MRNLINFAVLIMTIFIVSASGA. Cystine bridges form between cysteine 32-cysteine 78, cysteine 41-cysteine 61, cysteine 46-cysteine 71, and cysteine 50-cysteine 73.

This sequence belongs to the DEFL family.

It is found in the secreted. In Arabidopsis thaliana (Mouse-ear cress), this protein is Defensin-like protein 201.